Reading from the N-terminus, the 150-residue chain is Transcriptional regulator MraZ (150 aa).

2 SpoVT-AbrB domains span residues 5–52 and 81–124; these read VTHL…PLPD and AHDL…DAEA.

It belongs to the MraZ family. Forms oligomers.

It localises to the cytoplasm. Its subcellular location is the nucleoid. The chain is Transcriptional regulator MraZ from Alkalilimnicola ehrlichii (strain ATCC BAA-1101 / DSM 17681 / MLHE-1).